A 333-amino-acid chain; its full sequence is Olfactory receptor 9S13 (333 aa).

Over 1-35 (MATAVHRNGSLTPVSLRVFVLVGFGGGALTQALLF) the chain is Extracellular. Asn-8 is a glycosylation site (N-linked (GlcNAc...) asparagine). A helical membrane pass occupies residues 36–56 (AVFLVLYVVTVLGNLTMIVVI). Residues 57–72 (TLDARLHSPMYFFLKN) lie on the Cytoplasmic side of the membrane. A helical transmembrane segment spans residues 73 to 93 (LSFVDLCYSSAIAPNALANFL). Topologically, residues 94–106 (STSKVISFEACAT) are extracellular. A disulfide bond links Cys-104 and Cys-196. A helical membrane pass occupies residues 107–127 (QFFFFSLLATTETFLLAVMAY). Topologically, residues 128-150 (DRFMAICSPLRYPVTMCPTTCTR) are cytoplasmic. A helical transmembrane segment spans residues 151 to 171 (LVLGTFCVGCLNSIVQTSLTF). Over 172 to 203 (QLPFCSSNRIDHFYCDVPPLLQLACASTALNE) the chain is Extracellular. Residues 204–224 (LFLFGLCGFIIVSTTLAVLVS) form a helical membrane-spanning segment. The Cytoplasmic portion of the chain corresponds to 225-251 (YGYITVTILRMHSGSGRHKVFSTCGSH). Residues 252–272 (LTAVSLFYGTLFVMYAQPGAL) form a helical membrane-spanning segment. Residues 273-278 (TSMEQG) lie on the Extracellular side of the membrane. A helical membrane pass occupies residues 279–299 (KVVSIFYTLVIPMLNPLIYSL). Residues 300 to 333 (RNKDVKDALQRLGQRHSLVKAVRGCPAAGGNASV) lie on the Cytoplasmic side of the membrane.

Belongs to the G-protein coupled receptor 1 family.

The protein resides in the cell membrane. Its function is as follows. Odorant receptor. The chain is Olfactory receptor 9S13 from Mus musculus (Mouse).